The following is a 707-amino-acid chain: Eomesodermin homolog (707 aa).

Over residues 27 to 42 (GGGGGGGGGGGGGGGS) the composition is skewed to gly residues. The disordered stretch occupies residues 27–125 (GGGGGGGGGG…GSPCAEEELP (99 aa)). Low complexity predominate over residues 73–93 (AGSAEPAGAGAGAPAAMLSDA). A Phosphoserine modification is found at Ser117. The segment at residues 278–458 (LWLKFHRHQT…HNPFAKGFRD (181 aa)) is a DNA-binding region (T-box). Thr473 is modified (phosphothreonine). The tract at residues 592 to 707 (AMAGWGGRGA…GAYYAFYTSP (116 aa)) is required for transcription activation. Residues 642–689 (TPPSIKSLDSSDSGVYNSACKRKRLSPSTPSNGNSPPIKCEDINTEEY) are disordered. The segment covering 648-657 (SLDSSDSGVY) has biased composition (polar residues). Positions 667-678 (SPSTPSNGNSPP) are enriched in low complexity. A compositionally biased stretch (basic and acidic residues) spans 680-689 (KCEDINTEEY).

As to expression, expressed in CD8+ T-cells.

It localises to the nucleus. In terms of biological role, functions as a transcriptional activator playing a crucial role during development. Functions in trophoblast differentiation and later in gastrulation, regulating both mesoderm delamination and endoderm specification. Plays a role in brain development being required for the specification and the proliferation of the intermediate progenitor cells and their progeny in the cerebral cortex. Required for differentiation and migration of unipolar dendritic brush cells. Also involved in the differentiation of CD8+ T-cells during immune response regulating the expression of lytic effector genes. The polypeptide is Eomesodermin homolog (Eomes) (Mus musculus (Mouse)).